The sequence spans 146 residues: Hemoglobin subunit beta (146 aa).

Val1 carries the N-acetylvaline modification. Residues 2–146 (HLTAEEKSAV…VATALAHKYH (145 aa)) enclose the Globin domain. Thr12 is subject to Phosphothreonine. Ser44 is modified (phosphoserine). Lys59 carries the N6-acetyllysine modification. His63 is a binding site for heme b. Residue Lys82 is modified to N6-acetyllysine. Residue His92 participates in heme b binding. Residue Cys93 is modified to S-nitrosocysteine. Lys144 is subject to N6-acetyllysine.

This sequence belongs to the globin family. As to quaternary structure, heterotetramer of two alpha chains and two beta chains. Red blood cells.

Involved in oxygen transport from the lung to the various peripheral tissues. This Cebus albifrons (White-fronted capuchin) protein is Hemoglobin subunit beta (HBB).